Reading from the N-terminus, the 256-residue chain is MPRSRALILGVLALTTMLSLCGGEDDIEADHVGTYGISVYQSPGDIGQYTFEFDGDELFYVDLDKKETVWMLPEFGQLASFDPQGGLQNIAVVKHNLGVLTKRSNSTPATNEAPQATVFPKSPVLLGQPNTLICFVDNIFPPVINITWLRNSKSVADGVYETSFFVNRDYSFHKLSYLTFIPSDDDIYDCKVEHWGLEEPVLKHWEPEIPAPMSELTETVVCALGLSVGLVGIVVGTIFIIQGLRSGGTSRHPGPL.

The first 23 residues, 1–23 (MPRSRALILGVLALTTMLSLCGG), serve as a signal peptide directing secretion. Residues 24–111 (EDDIEADHVG…KRSNSTPATN (88 aa)) are alpha-1. The Extracellular portion of the chain corresponds to 24–218 (EDDIEADHVG…IPAPMSELTE (195 aa)). Positions 112 to 205 (EAPQATVFPK…GLEEPVLKHW (94 aa)) are alpha-2. An Ig-like C1-type domain is found at 114–206 (PQATVFPKSP…LEEPVLKHWE (93 aa)). Cys134 and Cys190 are joined by a disulfide. N-linked (GlcNAc...) asparagine glycosylation is present at Asn145. The interval 206-218 (EPEIPAPMSELTE) is connecting peptide. A helical membrane pass occupies residues 219–244 (TVVCALGLSVGLVGIVVGTIFIIQGL). Residues 245 to 256 (RSGGTSRHPGPL) lie on the Cytoplasmic side of the membrane.

The protein belongs to the MHC class II family.

The protein localises to the membrane. The polypeptide is H-2 class II histocompatibility antigen, A-B alpha chain (H2-Aa) (Mus musculus (Mouse)).